The primary structure comprises 652 residues: Acetyl-coenzyme A synthetase (652 aa).

CoA contacts are provided by residues 191-194 (RAGR), T311, and N335. ATP-binding positions include 387-389 (GEP), 411-416 (DTWWQT), D500, and R515. Residue S523 participates in CoA binding. Residue R526 participates in ATP binding. Residues V537, H539, and I542 each contribute to the Mg(2+) site. A CoA-binding site is contributed by R584. K609 carries the N6-acetyllysine modification.

It belongs to the ATP-dependent AMP-binding enzyme family. Mg(2+) is required as a cofactor. In terms of processing, acetylated. Deacetylation by the SIR2-homolog deacetylase activates the enzyme.

The catalysed reaction is acetate + ATP + CoA = acetyl-CoA + AMP + diphosphate. Functionally, catalyzes the conversion of acetate into acetyl-CoA (AcCoA), an essential intermediate at the junction of anabolic and catabolic pathways. Acs undergoes a two-step reaction. In the first half reaction, Acs combines acetate with ATP to form acetyl-adenylate (AcAMP) intermediate. In the second half reaction, it can then transfer the acetyl group from AcAMP to the sulfhydryl group of CoA, forming the product AcCoA. Its function is as follows. Enables the cell to use acetate during aerobic growth to generate energy via the TCA cycle, and biosynthetic compounds via the glyoxylate shunt. Acetylates CheY, the response regulator involved in flagellar movement and chemotaxis. In Citrobacter koseri (strain ATCC BAA-895 / CDC 4225-83 / SGSC4696), this protein is Acetyl-coenzyme A synthetase.